A 21-amino-acid chain; its full sequence is Thylakoid lumenal 13.8 kDa protein (21 aa).

Its subcellular location is the plastid. It localises to the chloroplast thylakoid lumen. The sequence is that of Thylakoid lumenal 13.8 kDa protein from Spinacia oleracea (Spinach).